The following is a 25-amino-acid chain: Spinigerin (25 aa).

It is found in the secreted. Active against Gram-positive bacteria B.megaterium and M.luteus, Gram-negative bacteria E.coli SBS363 and D22, K.pneumoniae, S.typhimurium and P.aeruginosa, yeast C.albicans and filamentous fungi F.culmorum, N.crassa, N.hematococca and T.viridae. Inactive against Gram-positive bacteria B.subtilis, S.pyogenes, B.thuringiensis and S.aureus, Gram-negative bacteria E.cloacae and E.carotovora and filamentous fungus B.bassiana. The sequence is that of Spinigerin from Pseudacanthotermes spiniger.